The primary structure comprises 69 residues: MARVTVEDCLDHVDNRFELVMLASKRARQISQYGKDPKVEWENDKPTVVALREIAAGLITSEMLEQDED.

The protein belongs to the RNA polymerase subunit omega family. In terms of assembly, the RNAP catalytic core consists of 2 alpha, 1 beta, 1 beta' and 1 omega subunit. When a sigma factor is associated with the core the holoenzyme is formed, which can initiate transcription.

The catalysed reaction is RNA(n) + a ribonucleoside 5'-triphosphate = RNA(n+1) + diphosphate. Functionally, promotes RNA polymerase assembly. Latches the N- and C-terminal regions of the beta' subunit thereby facilitating its interaction with the beta and alpha subunits. This is DNA-directed RNA polymerase subunit omega from Hahella chejuensis (strain KCTC 2396).